The primary structure comprises 137 residues: Peptide methionine sulfoxide reductase MsrB (137 aa).

The 123-residue stretch at 7 to 129 folds into the MsrB domain; that stretch reads AEELKKKLSE…NSASLAFSDE (123 aa). Zn(2+) is bound by residues C46, C49, C95, and C98. Catalysis depends on C118, which acts as the Nucleophile.

This sequence belongs to the MsrB Met sulfoxide reductase family. Zn(2+) serves as cofactor.

It carries out the reaction L-methionyl-[protein] + [thioredoxin]-disulfide + H2O = L-methionyl-(R)-S-oxide-[protein] + [thioredoxin]-dithiol. In Salmonella agona (strain SL483), this protein is Peptide methionine sulfoxide reductase MsrB.